Here is a 296-residue protein sequence, read N- to C-terminus: NADH-cytochrome b5 reductase 2-A (296 aa).

Residues 15–35 (FVIGAPTIALCSYYYSSGAFL) traverse the membrane as a helical segment. An FAD-binding FR-type domain is found at 47-151 (NNWIDLPISR…KGPIPKWKWV (105 aa)). Residue 154–189 (SFESITLIGGGTGITPLYQLIHAITKNPNDKTKIRL) participates in FAD binding.

This sequence belongs to the flavoprotein pyridine nucleotide cytochrome reductase family. FAD is required as a cofactor.

It localises to the mitochondrion outer membrane. It catalyses the reaction 2 Fe(III)-[cytochrome b5] + NADH = 2 Fe(II)-[cytochrome b5] + NAD(+) + H(+). Functionally, may mediate the reduction of outer membrane cytochrome b5. This chain is NADH-cytochrome b5 reductase 2-A (MCR1A), found in Vanderwaltozyma polyspora (strain ATCC 22028 / DSM 70294 / BCRC 21397 / CBS 2163 / NBRC 10782 / NRRL Y-8283 / UCD 57-17) (Kluyveromyces polysporus).